The chain runs to 254 residues: Major prion protein (254 aa).

The first 22 residues, 1–22 (MANLSYWLLALFVATWTDVGLC), serve as a signal peptide directing secretion. The interaction with GRB2, ERI3 and SYN1 stretch occupies residues 23–231 (KKRPKPGGWN…SQAYYDGRRS (209 aa)). The tract at residues 25 to 108 (RPKPGGWNTG…WNKPNKPKTS (84 aa)) is disordered. A run of 5 repeats spans residues 51 to 59 (PQGGGTWGQ), 60 to 67 (PHGGGWGQ), 68 to 75 (PHGGGWGQ), 76 to 83 (PHGGGWGQ), and 84 to 91 (PHGGGWGQ). The interval 51-91 (PQGGGTWGQPHGGGWGQPHGGGWGQPHGGGWGQPHGGGWGQ) is 5 X 8 AA tandem repeats of P-H-G-G-G-W-G-Q. The segment covering 52–95 (QGGGTWGQPHGGGWGQPHGGGWGQPHGGGWGQPHGGGWGQGGGT) has biased composition (gly residues). Cu(2+)-binding residues include histidine 61, glycine 62, glycine 63, histidine 69, glycine 70, glycine 71, histidine 77, glycine 78, glycine 79, histidine 85, glycine 86, and glycine 87. Residues 90 to 231 (GQGGGTHNQW…SQAYYDGRRS (142 aa)) form a prP27-30 (protease resistant core) region. The cysteines at positions 179 and 214 are disulfide-linked. N-linked (GlcNAc...) asparagine glycosylation is found at asparagine 181 and asparagine 197. Serine 231 carries the GPI-anchor amidated serine lipid modification. A propeptide spans 232–254 (SAVLFSSPPVILLISFLIFLIVG) (removed in mature form).

This sequence belongs to the prion family. As to quaternary structure, monomer and homodimer. Has a tendency to aggregate into amyloid fibrils containing a cross-beta spine, formed by a steric zipper of superposed beta-strands. Soluble oligomers may represent an intermediate stage on the path to fibril formation. Copper binding may promote oligomerization. Interacts with GRB2, APP, ERI3/PRNPIP and SYN1. Mislocalized cytosolically exposed PrP interacts with MGRN1; this interaction alters MGRN1 subcellular location and causes lysosomal enlargement. Interacts with KIAA1191.

The protein localises to the cell membrane. The protein resides in the golgi apparatus. Functionally, its primary physiological function is unclear. Has cytoprotective activity against internal or environmental stresses. May play a role in neuronal development and synaptic plasticity. May be required for neuronal myelin sheath maintenance. May play a role in iron uptake and iron homeostasis. Soluble oligomers are toxic to cultured neuroblastoma cells and induce apoptosis (in vitro). Association with GPC1 (via its heparan sulfate chains) targets PRNP to lipid rafts. Also provides Cu(2+) or Zn(2+) for the ascorbate-mediated GPC1 deaminase degradation of its heparan sulfate side chains. This chain is Major prion protein (PRNP), found in Nothocricetulus migratorius (Gray dwarf hamster).